We begin with the raw amino-acid sequence, 49 residues long: Large ribosomal subunit protein bL33 (49 aa).

The protein belongs to the bacterial ribosomal protein bL33 family.

The chain is Large ribosomal subunit protein bL33 from Syntrophobacter fumaroxidans (strain DSM 10017 / MPOB).